A 525-amino-acid polypeptide reads, in one-letter code: MSTCIQKLFEEQVVRTPDEVAVIFKKETLTYKELNEKSNQLARLLREGGVGPDTVVGIMVERSIEMVVGIFGILKAGGAYLPLSPNHPSSRLQFIIEDSGAKLILTQKQILHRFQDSLKADMLALDSISYEGKGENLECINKPSDLVYVIYTSGSTGKPKGVMIEHSALINRIEWMQEAYPISSKDTILQKTPYTFDVSVWEMFWWAIVGAKVCILAPGMEKFPQAIIETTESNDVTIMHFVPSMLSAFLHYLDVTGETNRIKSLKQVFVSGEALLSQHINRFNKLLNFSNGTLLTNLYGPTEATIDVTAYDCPTHEITEGSVPIGRPIKNIEMFVVDKYGNKLPEGHIGELCISGIGLARGYVNRPQLTAEKFVQYSLDTRIYKTGDLALIRSDGNIEFHGRIDFQVKVNGLRIELGEIESCLMSCEGVLQCAVIVRQESEMVVKLIAFYESENDIELERLKKYLRLFLPDYMIPNSFVRVNEMPLTDSGKIDRKVLALLGSDKYSHHTTLVGGSVNEESSKDS.

It belongs to the ATP-dependent AMP-binding enzyme family.

It catalyses the reaction holo-[peptidyl-carrier protein] + L-serine + ATP = L-seryl-[peptidyl-carrier protein] + AMP + diphosphate. It functions in the pathway antibiotic biosynthesis. Its function is as follows. Involved in the biosynthesis of the linear aminopolyol antibiotic zwittermicin A (ZmA). Specifically adenylates L-serine and loads it onto the holo form of ZmaH via a thioester linkage to the phosphopanthetheine moiety. This Bacillus cereus protein is Zwittermicin A synthase ZmaJ.